The chain runs to 1215 residues: Endoplasmic reticulum transmembrane helix translocase (1215 aa).

At Met-1 to Pro-27 the chain is on the cytoplasmic side. The chain crosses the membrane as a helical span at residues Tyr-28–Tyr-43. The Lumenal portion of the chain corresponds to Phe-44 to Trp-56. The chain crosses the membrane as a helical span at residues Thr-57–Ala-76. Over Trp-77–Thr-188 the chain is Cytoplasmic. The segment at Lys-156 to Pro-185 is A-domain; part 1. The chain crosses the membrane as a helical span at residues Phe-189–Glu-216. Residue Phe-217 is a topological domain, lumenal. The helical transmembrane segment at Trp-218–Phe-246 threads the bilayer. Residues Arg-247–Asp-395 lie on the Cytoplasmic side of the membrane. The segment at Gly-250 to Glu-390 is A-domain; part 2. Ser-324 is subject to Phosphoserine. Residues Asn-396–Gly-425 traverse the membrane as a helical segment. Topologically, residues Arg-426–Ile-427 are lumenal. The next 2 helical transmembrane spans lie at Gln-428–Val-442 and Glu-446–Lys-464. Residues Phe-465–Val-971 lie on the Cytoplasmic side of the membrane. A P-domain; part 1 region spans residues Tyr-466–Glu-495. Asp-487 serves as the catalytic 4-aspartylphosphate intermediate. Mg(2+) is bound by residues Asp-487 and Thr-489. Residues Asp-487–Thr-489, Phe-582, Arg-634, Asp-699, and Asp-816–Asp-820 contribute to the ATP site. An N-domain region spans residues Leu-497–Pro-674. The tract at residues Asp-677–Thr-837 is P-domain; part 2. Asp-816 contributes to the Mg(2+) binding site. The arm-like stretch occupies residues Glu-838 to Leu-953. Position 936 is a phosphoserine (Ser-936). A P-domain; part 3 region spans residues Lys-954–Ala-969. Residues Ser-972 to Met-1011 traverse the membrane as a helical segment. At Ala-1012 to Gly-1017 the chain is on the lumenal side. Residues Asp-1018–Ile-1035 form a helical membrane-spanning segment. Residues Ser-1036 to Asn-1055 lie on the Cytoplasmic side of the membrane. The chain crosses the membrane as a helical span at residues Val-1056–Glu-1084. Residues Pro-1085 to Ser-1099 lie on the Lumenal side of the membrane. The helical transmembrane segment at Leu-1100–Tyr-1121 threads the bilayer. Topologically, residues Gln-1122–Asn-1133 are cytoplasmic. Residues Lys-1134–Ala-1151 traverse the membrane as a helical segment. The Lumenal portion of the chain corresponds to Thr-1152–Thr-1168. Residues Asp-1169 to Phe-1197 form a helical membrane-spanning segment. Topologically, residues Met-1198–Lys-1215 are cytoplasmic.

The protein belongs to the cation transport ATPase (P-type) (TC 3.A.3) family. Type V subfamily. Requires Mg(2+) as cofactor.

The protein resides in the endoplasmic reticulum membrane. It catalyses the reaction [protein]-with a C-terminal TM segment(out) + ATP + H2O = [protein]-with a C-terminal TM segment(in) + ADP + phosphate + H(+). With respect to regulation, the ATPase activity is stimulated by phosphatidylinositol 4-phosphate (PI4P). Its function is as follows. Endoplasmic reticulum translocase required to remove mitochondrial transmembrane proteins mistargeted to the endoplasmic reticulum. Acts as a dislocase that mediates the ATP-dependent extraction of mislocalized mitochondrial transmembrane proteins from the endoplasmic reticulum membrane. Specifically binds mitochondrial tail-anchored transmembrane proteins: has an atypically large substrate-binding pocket that recognizes and binds moderately hydrophobic transmembranes with short hydrophilic lumenal domains. In Saccharomyces cerevisiae (strain ATCC 204508 / S288c) (Baker's yeast), this protein is Endoplasmic reticulum transmembrane helix translocase.